A 201-amino-acid chain; its full sequence is MTRPFVMGLTGSIGMGKSAVALMLREMGVPVFDADAAVHQLQGPRGPLLPAIEAAFPGTTGPEGVKRQDLGARVFGDADALRRLEAIVHPAVARMREAFMIEHMGEPLVVFDIPLLFEKGHGKDLDAVMVVSAPAEVQRQRVLARPGMTVEKFAHILSLQVPDAEKRARADYVIDTGLTLAETEGQVAELVRAIREKNPRG.

The DPCK domain occupies 6 to 201 (VMGLTGSIGM…RAIREKNPRG (196 aa)). Position 14–19 (14–19 (GMGKSA)) interacts with ATP.

It belongs to the CoaE family.

The protein resides in the cytoplasm. It catalyses the reaction 3'-dephospho-CoA + ATP = ADP + CoA + H(+). Its pathway is cofactor biosynthesis; coenzyme A biosynthesis; CoA from (R)-pantothenate: step 5/5. In terms of biological role, catalyzes the phosphorylation of the 3'-hydroxyl group of dephosphocoenzyme A to form coenzyme A. This is Dephospho-CoA kinase from Novosphingobium aromaticivorans (strain ATCC 700278 / DSM 12444 / CCUG 56034 / CIP 105152 / NBRC 16084 / F199).